The sequence spans 696 residues: Spindle assembly checkpoint component MAD1 (696 aa).

2 disordered regions span residues 1-22 (MSTGSSPFVDHKSNNSTISINN) and 394-415 (QIHANQQHKQQEQEKEENTENK). A compositionally biased stretch (basic and acidic residues) spans 402–413 (KQQEQEKEENTE).

Belongs to the MAD1 family. Component of the mitotic checkpoint complex (MCC).

It localises to the nucleus. Central component of the spindle assembly checkpoint which is a feedback control that prevents cells with incompletely assembled spindles from leaving mitosis. The polypeptide is Spindle assembly checkpoint component MAD1 (Candida albicans (strain SC5314 / ATCC MYA-2876) (Yeast)).